The following is a 375-amino-acid chain: Queuine tRNA-ribosyltransferase (375 aa).

D93 serves as the catalytic Proton acceptor. Residues 93–97 (DSGGY), D147, Q194, and G221 each bind substrate. The RNA binding stretch occupies residues 252 to 258 (GVGKPDD). Catalysis depends on D271, which acts as the Nucleophile. The segment at 276-280 (TRSGR) is RNA binding; important for wobble base 34 recognition. Positions 309, 311, 314, and 340 each coordinate Zn(2+).

This sequence belongs to the queuine tRNA-ribosyltransferase family. In terms of assembly, homodimer. Within each dimer, one monomer is responsible for RNA recognition and catalysis, while the other monomer binds to the replacement base PreQ1. It depends on Zn(2+) as a cofactor.

The enzyme catalyses 7-aminomethyl-7-carbaguanine + guanosine(34) in tRNA = 7-aminomethyl-7-carbaguanosine(34) in tRNA + guanine. The protein operates within tRNA modification; tRNA-queuosine biosynthesis. Catalyzes the base-exchange of a guanine (G) residue with the queuine precursor 7-aminomethyl-7-deazaguanine (PreQ1) at position 34 (anticodon wobble position) in tRNAs with GU(N) anticodons (tRNA-Asp, -Asn, -His and -Tyr). Catalysis occurs through a double-displacement mechanism. The nucleophile active site attacks the C1' of nucleotide 34 to detach the guanine base from the RNA, forming a covalent enzyme-RNA intermediate. The proton acceptor active site deprotonates the incoming PreQ1, allowing a nucleophilic attack on the C1' of the ribose to form the product. After dissociation, two additional enzymatic reactions on the tRNA convert PreQ1 to queuine (Q), resulting in the hypermodified nucleoside queuosine (7-(((4,5-cis-dihydroxy-2-cyclopenten-1-yl)amino)methyl)-7-deazaguanosine). The chain is Queuine tRNA-ribosyltransferase from Sphingopyxis alaskensis (strain DSM 13593 / LMG 18877 / RB2256) (Sphingomonas alaskensis).